Reading from the N-terminus, the 250-residue chain is Proteasome subunit alpha type-8 (250 aa).

Belongs to the peptidase T1A family. As to quaternary structure, component of the outer alpha-ring of the 20S proteasome core which is composed of 28 subunits that are arranged in four stacked rings, resulting in a barrel-shaped structure. The catalytic chamber with the active sites is on the inside of the barrel. Interacts with canonical subunits of the spermatoproteasome, including proteasome activators PSME4 (also called PA200) and PSME3 (also called PA28-gamma). Interacts with proteasome-interacting proteins chaperones including CCT6B and CCT2, ubiquitin ligases (TRIP12, NEDD4, TRIM36 and RAD18), and ubiquitin specific proteases such as USP9X, USP34, USP5 and USP47. Interacts with meiotic proteins cyclin dependent kinase CDK1 and the ATPase TRIP13 as well as proteins of the synaptonemal complex SIX6OS1 and SYCE3.

Its subcellular location is the nucleus. Its function is as follows. Component of the spermatoproteasome, a proteasome specifically found in testis that promotes acetylation-dependent degradation of histones, thereby participating actively to the exchange of histones during spermatogenesis. The proteasome is a protein complex that degrades unneeded or damaged proteins by proteolysis, a chemical reaction that breaks peptide bonds. Required for 20S core proteasome assembly, essential for the degradation of meiotic proteins RAD51 and RPA1 at late prophase I and the progression of meiosis I during spermatogenesis. Localizes to the synaptonemal complex, a 'zipper'-like structure that holds homologous chromosome pairs in synapsis during meiotic prophase I. This chain is Proteasome subunit alpha type-8, found in Mus musculus (Mouse).